We begin with the raw amino-acid sequence, 472 residues long: Trigger factor (472 aa).

The region spanning 174–261 (GDIALVSFKG…LEDLKIKELP (88 aa)) is the PPIase FKBP-type domain. Positions 433–472 (NNTVVEKPPEKARDQIKEKSSKKKTTKTNKEKKSSKTPKS) are disordered. The span at 439 to 451 (KPPEKARDQIKEK) shows a compositional bias: basic and acidic residues.

Belongs to the FKBP-type PPIase family. Tig subfamily.

Its subcellular location is the cytoplasm. It carries out the reaction [protein]-peptidylproline (omega=180) = [protein]-peptidylproline (omega=0). In terms of biological role, involved in protein export. Acts as a chaperone by maintaining the newly synthesized protein in an open conformation. Functions as a peptidyl-prolyl cis-trans isomerase. The sequence is that of Trigger factor from Prochlorococcus marinus (strain NATL1A).